A 459-amino-acid chain; its full sequence is Mitochondrial distribution and morphology protein 10 (459 aa).

The protein belongs to the MDM10 family. Component of the ER-mitochondria encounter structure (ERMES) or MDM complex, composed of mmm1, mdm10, mdm12 and mdm34. Associates with the mitochondrial outer membrane sorting assembly machinery SAM(core) complex.

It localises to the mitochondrion outer membrane. Functionally, component of the ERMES/MDM complex, which serves as a molecular tether to connect the endoplasmic reticulum and mitochondria. Components of this complex are involved in the control of mitochondrial shape and protein biogenesis and may function in phospholipid exchange. mdm10 is involved in the late assembly steps of the general translocase of the mitochondrial outer membrane (TOM complex). Functions in the tom40-specific route of the assembly of outer membrane beta-barrel proteins, including the association of tom40 with the receptor tom22 and small TOM proteins. Can associate with the SAM(core) complex as well as the mdm12-mmm1 complex, both involved in late steps of the major beta-barrel assembly pathway, that is responsible for biogenesis of all outer membrane beta-barrel proteins. May act as a switch that shuttles between both complexes and channels precursor proteins into the tom40-specific pathway. Plays a role in mitochondrial morphology and in the inheritance of mitochondria. The chain is Mitochondrial distribution and morphology protein 10 (mdmB) from Aspergillus terreus (strain NIH 2624 / FGSC A1156).